The following is a 172-amino-acid chain: uncharacterized protein (172 aa).

This is an uncharacterized protein from Pasteurella multocida (strain Pm70).